A 212-amino-acid chain; its full sequence is Hemagglutinin 2 (212 aa).

The protein resides in the secreted. In terms of biological role, induces agglutination of neuraminidase-treated erythrocytes. The protein is Hemagglutinin 2 (hag2) of Eikenella corrodens.